The sequence spans 203 residues: VEL1-related protein SPBPB2B2.15 (203 aa).

Residues 1–16 (MFKNLIFLFFIGLATA) form the signal peptide.

It belongs to the VEL1 family.

The protein localises to the cytoplasm. Its subcellular location is the cytosol. In Schizosaccharomyces pombe (strain 972 / ATCC 24843) (Fission yeast), this protein is VEL1-related protein SPBPB2B2.15.